We begin with the raw amino-acid sequence, 226 residues long: 2,3-bisphosphoglycerate-dependent phosphoglycerate mutase (226 aa).

Residues 8 to 15, 21 to 22, Arg58, 109 to 112, Lys120, 136 to 137, and 180 to 181 contribute to the substrate site; these read RHGQSVWN, TG, ERMY, RR, and GN. His9 functions as the Tele-phosphohistidine intermediate in the catalytic mechanism. The active-site Proton donor/acceptor is Glu109.

It belongs to the phosphoglycerate mutase family. BPG-dependent PGAM subfamily.

It carries out the reaction (2R)-2-phosphoglycerate = (2R)-3-phosphoglycerate. It functions in the pathway carbohydrate degradation; glycolysis; pyruvate from D-glyceraldehyde 3-phosphate: step 3/5. Catalyzes the interconversion of 2-phosphoglycerate and 3-phosphoglycerate. In Chlamydia trachomatis serovar A (strain ATCC VR-571B / DSM 19440 / HAR-13), this protein is 2,3-bisphosphoglycerate-dependent phosphoglycerate mutase.